A 393-amino-acid chain; its full sequence is Arginine biosynthesis bifunctional protein ArgJ (393 aa).

6 residues coordinate substrate: Thr-142, Lys-168, Thr-179, Glu-265, Asn-388, and Ser-393. Residue Thr-179 is the Nucleophile of the active site.

Belongs to the ArgJ family. As to quaternary structure, heterotetramer of two alpha and two beta chains.

Its subcellular location is the cytoplasm. The catalysed reaction is N(2)-acetyl-L-ornithine + L-glutamate = N-acetyl-L-glutamate + L-ornithine. The enzyme catalyses L-glutamate + acetyl-CoA = N-acetyl-L-glutamate + CoA + H(+). It functions in the pathway amino-acid biosynthesis; L-arginine biosynthesis; L-ornithine and N-acetyl-L-glutamate from L-glutamate and N(2)-acetyl-L-ornithine (cyclic): step 1/1. Its pathway is amino-acid biosynthesis; L-arginine biosynthesis; N(2)-acetyl-L-ornithine from L-glutamate: step 1/4. Functionally, catalyzes two activities which are involved in the cyclic version of arginine biosynthesis: the synthesis of N-acetylglutamate from glutamate and acetyl-CoA as the acetyl donor, and of ornithine by transacetylation between N(2)-acetylornithine and glutamate. This is Arginine biosynthesis bifunctional protein ArgJ from Desulfotalea psychrophila (strain LSv54 / DSM 12343).